Consider the following 315-residue polypeptide: Cobalamin biosynthesis protein CobD (315 aa).

7 consecutive transmembrane segments (helical) span residues 1–21 (MLDIIIAVIIDWIIGDPYWFP), 50–70 (VFGGFIVIIVSSISFLIPFII), 79–99 (VIYHVINIFFLWTVLAAKSLH), 151–171 (DGIIAPLLFAMLGGAPLAMMY), 209–229 (VTGIIMCLVSPIIGGNIFYSI), 250–270 (AAAAASGIMLGGTNIYFGEVV), and 291–311 (IILMYSSEILFIIIYVIIICF).

The protein belongs to the CobD/CbiB family.

It is found in the cell membrane. The protein operates within cofactor biosynthesis; adenosylcobalamin biosynthesis. Its function is as follows. Converts cobyric acid to cobinamide by the addition of aminopropanol on the F carboxylic group. The protein is Cobalamin biosynthesis protein CobD of Clostridium acetobutylicum (strain ATCC 824 / DSM 792 / JCM 1419 / IAM 19013 / LMG 5710 / NBRC 13948 / NRRL B-527 / VKM B-1787 / 2291 / W).